The primary structure comprises 181 residues: MIQDSEFFRMEGVPITKEEIRAVSIGKLNLDPEDIVLDIGCGSGGMSVEIAKRSKFVYSIDNSEDAKNTTSINLKKFKIENCEVFHGDAKDLISKFDFNKVFIGGTQNIEQTLEILKEKKIEKVVANTIVLENSVKIITKFEELGYNVDFVNLSVSYGKKISSGHIMLSKNPITIITATLK.

S-adenosyl-L-methionine contacts are provided by residues threonine 16, 40–44 (GCGSG), aspartate 61, and alanine 89.

Belongs to the methyltransferase superfamily. Archaeal-type CbiT family.

The enzyme catalyses Co-precorrin-6B + S-adenosyl-L-methionine = Co-precorrin-7 + S-adenosyl-L-homocysteine + CO2. It functions in the pathway cofactor biosynthesis; adenosylcobalamin biosynthesis; cob(II)yrinate a,c-diamide from sirohydrochlorin (anaerobic route): step 8/10. Functionally, catalyzes the methylation of C-15 in cobalt-precorrin-6B followed by the decarboxylation of C-12 to form cobalt-precorrin-7. The polypeptide is Probable cobalt-precorrin-6B C(15)-methyltransferase (decarboxylating) (Methanococcus maripaludis (strain C5 / ATCC BAA-1333)).